Here is a 359-residue protein sequence, read N- to C-terminus: MMP endo-(1,4)-3-O-methyl-alpha-D-mannosidase (359 aa).

Monomer in solution.

The catalysed reaction is Endohydrolysis of 3-O-methyl-alpha-D-mannosyl-(1-&gt;4)-3-O-methyl-D-mannose linkages within (1,4)-3-O-methyl-alpha-D-mannnan substrates.. In terms of biological role, hydrolase involved in the biosynthesis of 3-O-methylmannose polysaccharides (MMP), which are intracellular polymethylated polysaccharides implicated in the modulation of fatty acid metabolism in non-tuberculous mycobacteria. Highly specific hydrolase that catalyzes the internal cleavage of MMP. Is able to hydrolyze purified MMP into distinct lower order oligomannosides but does not cleave acylated or deacylated forms of 6-O-methylglucose lipopolysaccharide (MGLP), beta-mannans, synthetic 4alpha-oligomannosides or its own reaction products. Products were identified as four distinct oligomannosides differing in the number of mannose units (4 to 8) and methylation pattern (free or methylated C1-OH). Might serve as a recycling enzyme that hydrolyzes mature MMP into defined-size smaller oligomannosides that are, in turn, substrates for ManT and MeT1 activities for further processing into new daughter MMP chains. This is MMP endo-(1,4)-3-O-methyl-alpha-D-mannosidase from Mycolicibacterium hassiacum (strain DSM 44199 / CIP 105218 / JCM 12690 / 3849) (Mycobacterium hassiacum).